We begin with the raw amino-acid sequence, 329 residues long: N-acetyl-gamma-glutamyl-phosphate reductase (329 aa).

Residue Cys155 is part of the active site.

Belongs to the NAGSA dehydrogenase family. Type 1 subfamily.

Its subcellular location is the cytoplasm. It carries out the reaction N-acetyl-L-glutamate 5-semialdehyde + phosphate + NADP(+) = N-acetyl-L-glutamyl 5-phosphate + NADPH + H(+). Its pathway is amino-acid biosynthesis; L-arginine biosynthesis; N(2)-acetyl-L-ornithine from L-glutamate: step 3/4. In terms of biological role, catalyzes the NADPH-dependent reduction of N-acetyl-5-glutamyl phosphate to yield N-acetyl-L-glutamate 5-semialdehyde. The chain is N-acetyl-gamma-glutamyl-phosphate reductase from Shewanella piezotolerans (strain WP3 / JCM 13877).